A 681-amino-acid polypeptide reads, in one-letter code: Envelope glycoprotein (681 aa).

A signal peptide spans 1 to 18 (MKTTCFLISLILIQGTKN). The Extracellular segment spans residues 19-648 (LPILEIASNN…GLGGKWWTSD (630 aa)). 5 cysteine pairs are disulfide-bonded: cysteine 37–cysteine 610, cysteine 92–cysteine 119, cysteine 211–cysteine 226, cysteine 512–cysteine 557, and cysteine 602–cysteine 609. The receptor-binding stretch occupies residues 38–188 (SGTLQKTEDV…FSRQGQGYRH (151 aa)). Residues asparagine 94, asparagine 171, asparagine 190, asparagine 202, asparagine 207, asparagine 219, asparagine 223, and asparagine 255 are each glycosylated (N-linked (GlcNAc...) asparagine; by host). A disordered region spans residues 223–427 (NQTCAPSKIP…PPTPSSTAQH (205 aa)). Polar residues-rich tracts occupy residues 244–259 (LTSTPTDATKLNTTDP), 281–290 (TSDAVTKQGL), and 308–318 (GGNNTNHSQDA). The tract at residues 277 to 455 (EPHTTSDAVT…PFLDGLINAP (179 aa)) is mucin-like region. N-linked (GlcNAc...) asparagine; by host glycans are attached at residues asparagine 310, asparagine 313, asparagine 325, asparagine 326, asparagine 337, asparagine 344, asparagine 345, asparagine 350, asparagine 360, asparagine 408, and asparagine 487. A compositionally biased stretch (low complexity) spans 337 to 347 (NTTTISTNNTS). The span at 348–414 (KHNFSTLSAP…TAPNTTNEHF (67 aa)) shows a compositional bias: polar residues. A fusion peptide region spans residues 529 to 549 (GLSWIPFFGPGIEGLYTAVLI). N-linked (GlcNAc...) asparagine; by host glycosylation occurs at asparagine 564. Asparagine 619 carries N-linked (GlcNAc...) asparagine; by host glycosylation. Residues 649 to 669 (WGVLTNLGILLLLSIAVLIAL) form a helical membrane-spanning segment. At 670 to 681 (SCICRIFTKYIG) the chain is on the cytoplasmic side. S-palmitoyl cysteine; by host attachment occurs at residues cysteine 671 and cysteine 673.

Belongs to the filoviruses glycoprotein family. Homotrimer; each monomer consists of a GP1 and a GP2 subunit linked by disulfide bonds. The resulting peplomers (GP1,2) protrude from the virus surface as spikes. GP1,2 interacts with human CD209 and CLEC4M (collectively referred to as DC-SIGN(R)). Asialoglycoprotein receptor (ASGP-R) may be a liver-specific receptor for GP1,2. Members of the Tyro3 receptor tyrosine kinase family may be cell entry factors interacting with GP1,2. In terms of processing, N-glycosylated. Post-translationally, O-glycosylated in the mucin-like region. Specific enzymatic cleavages in vivo yield mature proteins. The precursor is processed into GP1 and GP2 by host cell furin in the trans Golgi, and maybe by other host proteases, to yield the mature GP1 and GP2 proteins. The cleavage site corresponds to the furin optimal cleavage sequence [KR]-X-[KR]-R. In terms of processing, GP1 is phosphorylated on serine residues between residues 260 and 273.

The protein resides in the virion membrane. It is found in the host cell membrane. Its function is as follows. GP1 is responsible for binding to the receptor(s) on target cells. Interacts with CD209/DC-SIGN and CLEC4M/DC-SIGNR which act as cofactors for virus entry into the host cell. Binding to CD209 and CLEC4M, which are respectively found on dendritic cells (DCs), and on endothelial cells of liver sinusoids and lymph node sinuses, facilitate infection of macrophages and endothelial cells. These interactions not only facilitate virus cell entry, but also allow capture of viral particles by DCs and subsequent transmission to susceptible cells without DCs infection (trans infection). GP2 acts as a class I viral fusion protein. Under the current model, the protein has at least 3 conformational states: pre-fusion native state, pre-hairpin intermediate state, and post-fusion hairpin state. During viral and target cell membrane fusion, the coiled coil regions (heptad repeats) assume a trimer-of-hairpins structure, positioning the fusion peptide in close proximity to the C-terminal region of the ectodomain. The formation of this structure appears to drive apposition and subsequent fusion of viral and target cell membranes. Responsible for penetration of the virus into the cell cytoplasm by mediating the fusion of the membrane of the endocytosed virus particle with the endosomal membrane. Low pH in endosomes induces an irreversible conformational change in GP2, releasing the fusion hydrophobic peptide. This is Envelope glycoprotein (GP) from Lake Victoria marburgvirus (strain Musoke-80) (MARV).